Reading from the N-terminus, the 934-residue chain is Bifunctional uridylyltransferase/uridylyl-removing enzyme (934 aa).

A uridylyltransferase region spans residues 1–379; it reads MSAHDLKLEE…TFSRRKRKLS (379 aa). A uridylyl-removing region spans residues 380–736; the sequence is DDGAFISENH…AKPHAFEAVT (357 aa). The HD domain occupies 496 to 613; that stretch reads VDEHLLRCIA…IDFADTVQTM (118 aa). ACT domains follow at residues 737–818 and 848–931; these read EITV…DMLA and VIEV…RSPQ.

Belongs to the GlnD family. Requires Mg(2+) as cofactor.

The catalysed reaction is [protein-PII]-L-tyrosine + UTP = [protein-PII]-uridylyl-L-tyrosine + diphosphate. It carries out the reaction [protein-PII]-uridylyl-L-tyrosine + H2O = [protein-PII]-L-tyrosine + UMP + H(+). With respect to regulation, uridylyltransferase (UTase) activity is inhibited by glutamine, while glutamine activates uridylyl-removing (UR) activity. Its function is as follows. Modifies, by uridylylation and deuridylylation, the PII regulatory proteins (GlnB and homologs), in response to the nitrogen status of the cell that GlnD senses through the glutamine level. Under low glutamine levels, catalyzes the conversion of the PII proteins and UTP to PII-UMP and PPi, while under higher glutamine levels, GlnD hydrolyzes PII-UMP to PII and UMP (deuridylylation). Thus, controls uridylylation state and activity of the PII proteins, and plays an important role in the regulation of nitrogen assimilation and metabolism. The chain is Bifunctional uridylyltransferase/uridylyl-removing enzyme from Brucella suis (strain ATCC 23445 / NCTC 10510).